Here is a 348-residue protein sequence, read N- to C-terminus: N-formyl peptide receptor 2 (348 aa).

Residue Asn1 is glycosylated (N-linked (GlcNAc...) asparagine). Over 1–24 (NFSTPLNEHEEVSYESAGYTVLQI) the chain is Extracellular. A helical transmembrane segment spans residues 25–47 (LPLVVLGVTFVLGVLGNGLVIWV). The Cytoplasmic portion of the chain corresponds to 48 to 58 (AGFRMTRTVTT). The helical transmembrane segment at 59–80 (ICYLNLPLADFSFTATLPFLIV) threads the bilayer. The Extracellular portion of the chain corresponds to 81–97 (SMAMGEKWPFGWFLCKL). Cys95 and Cys173 form a disulfide bridge. A helical transmembrane segment spans residues 98–118 (IHIVVDINLFGSVFLIGFIAL). The Cytoplasmic segment spans residues 119–137 (DRCICVLHPVWAQNHRTVS). A helical transmembrane segment spans residues 138–159 (LAMKVIIGPWILALVLTLPVFL). Topologically, residues 160-202 (FLTTVTIPNGDTYCTFNFASWGGTPEERKNVAITMLTARGIIR) are extracellular. Residues 203–223 (FVIGFSMPMSIVAICYGLIAA) traverse the membrane as a helical segment. Residues 224 to 239 (KIHKKGMIKSSRPLRV) lie on the Cytoplasmic side of the membrane. The helical transmembrane segment at 240-263 (LTAVVASFFICWFPFQLVALLSTV) threads the bilayer. The Extracellular segment spans residues 264-283 (WLKEMLFYGKYKIINILVNP). A helical membrane pass occupies residues 284–303 (TSSLAFFNSCLNPMLYVFVG). The Cytoplasmic portion of the chain corresponds to 304 to 348 (QDFRERLIRSLPTSLERALSEDSAPTNDTAAKCASPPAETELQAM). Residues 323-348 (SEDSAPTNDTAAKCASPPAETELQAM) are disordered.

It belongs to the G-protein coupled receptor 1 family. Interacts with APP; the interaction takes place at the cell surface and the complex is then rapidly internalized.

Its subcellular location is the cell membrane. Functionally, low affinity receptor for N-formyl-methionyl peptides, which are powerful neutrophil chemotactic factors. Binding of FMLP to the receptor causes activation of neutrophils. This response is mediated via a G-protein that activates a phosphatidylinositol-calcium second messenger system. Receptor for the chemokine-like protein FAM19A5, mediating FAM19A5-stimulated macrophage chemotaxis and the inhibitory effect on TNFSF11/RANKL-induced osteoclast differentiation. The chain is N-formyl peptide receptor 2 (FPR2) from Pongo pygmaeus (Bornean orangutan).